Here is a 359-residue protein sequence, read N- to C-terminus: 4-galactosyl-N-acetylglucosaminide 3-alpha-L-fucosyltransferase 9 (359 aa).

Residues 1 to 11 (MTSASKGILRP) lie on the Cytoplasmic side of the membrane. A helical; Signal-anchor for type II membrane protein transmembrane segment spans residues 12 to 32 (FLIVCIILGCFMACLLIYIKP). Over 33–359 (TNSWIFSPME…VGNLEKWFWN (327 aa)) the chain is Lumenal. N-linked (GlcNAc...) asparagine glycosylation occurs at asparagine 62. Residues 63-168 (ETTILIWVWP…RRDSDIQVPY (106 aa)) form an acceptor-binding region. Residue glutamine 75 coordinates a beta-D-galactosyl-(1-&gt;4)-N-acetyl-beta-D-glucosaminyl derivative. 3 disulfides stabilise this stretch: cysteine 82–cysteine 335, cysteine 91–cysteine 338, and cysteine 190–cysteine 238. The N-linked (GlcNAc...) asparagine glycan is linked to asparagine 101. Glutamate 137 contacts a beta-D-galactosyl-(1-&gt;4)-N-acetyl-beta-D-glucosaminyl derivative. The active-site Nucleophile is the glutamate 137. Glutamate 137 is a binding site for GDP-beta-L-fucose. The N-linked (GlcNAc...) asparagine glycan is linked to asparagine 153. Tyrosine 168, valine 192, serine 194, asparagine 195, arginine 202, valine 226, tyrosine 241, asparagine 246, tyrosine 252, glutamate 255, and lysine 256 together coordinate GDP-beta-L-fucose. Residues 169–326 (GFLTVSTNPF…NWRKDFTVNL (158 aa)) are donor-binding. Positions 327 to 359 (PRFWESHACLACDHVKRHQEYKSVGNLEKWFWN) are acceptor-binding.

This sequence belongs to the glycosyltransferase 10 family. In terms of assembly, homodimer. In terms of processing, N-glycosylated with complex-type N-glycans.

The protein resides in the golgi apparatus. The protein localises to the trans-Golgi network membrane. It is found in the golgi apparatus membrane. The enzyme catalyses a beta-D-galactosyl-(1-&gt;4)-N-acetyl-beta-D-glucosaminyl derivative + GDP-beta-L-fucose = a beta-D-galactosyl-(1-&gt;4)-[alpha-L-fucosyl-(1-&gt;3)]-N-acetyl-beta-D-glucosaminyl derivative + GDP + H(+). It carries out the reaction an alpha-Neu5Ac-(2-&gt;3)-beta-D-Gal-(1-&gt;4)-beta-D-GlcNAc-(1-&gt;3)-beta-D-Gal-(1-&gt;4)-beta-D-GlcNAc derivative + GDP-beta-L-fucose = an alpha-Neu5Ac-(2-&gt;3)-beta-D-Gal-(1-&gt;4)-beta-D-GlcNAc-(1-&gt;3)-beta-D-Gal-(1-&gt;4)-[alpha-L-Fuc-(1-&gt;3)]-beta-D-GlcNAc derivative + GDP + H(+). The catalysed reaction is alpha-N-glycoloylneuraminosyl-(2-&gt;3)-beta-D-galactosyl-(1-&gt;4)-N-acetyl-beta-D-glucosaminyl-(1-&gt;3)-beta-D-galactosyl-(1-&gt;4)-N-acetyl-beta-D-glucosaminyl-(1-&gt;3)-beta-D-galactosyl-(1-&gt;4)-beta-D-glucosyl-(1&lt;-&gt;1')-ceramide + GDP-beta-L-fucose = alpha-N-glycoloylneuraminosyl-(2-&gt;3)-beta-D-galactosyl-(1-&gt;4)-N-acetyl-beta-D-glucosaminyl-(1-&gt;3)-beta-D-galactosyl-(1-&gt;4)-[alpha-L-fucosyl-(1-&gt;3)]-N-acetyl-beta-D-glucosaminyl-(1-&gt;3)-beta-D-galactosyl-(1-&gt;4)-beta-D-glucosyl-(1&lt;-&gt;1')-ceramide + GDP + H(+). It catalyses the reaction alpha-D-galactosyl-(1-&gt;3)-beta-D-galactosyl-(1-&gt;4)-N-acetyl-beta-D-glucosaminyl-(1-&gt;3)-beta-D-galactosyl-(1-&gt;4)-beta-D-glucosyl-(1&lt;-&gt;1')-ceramide + GDP-beta-L-fucose = a neolactoside IV(3)-alpha-Gal,III(3)-alpha-Fuc-nLc4Cer + GDP + H(+). The enzyme catalyses a neolactoside nLc4Cer + GDP-beta-L-fucose = a neolactoside III(3)-alpha-Fuc-nLc4Cer + GDP + H(+). It carries out the reaction an N-acetyl-alpha-neuraminyl-(2-&gt;3)-beta-D-galactosyl-(1-&gt;4)-N-acetyl-beta-D-glucosaminyl derivative + GDP-beta-L-fucose = an alpha-Neu5Ac-(2-&gt;3)-beta-D-Gal-(1-&gt;4)-[alpha-L-Fuc-(1-&gt;3)]-beta-D-GlcNAc derivative + GDP + H(+). The catalysed reaction is beta-D-Gal-(1-&gt;4)-beta-D-GlcNAc-(1-&gt;3)-beta-D-Gal-(1-&gt;4)-D-Glc + GDP-beta-L-fucose = beta-D-Gal-(1-&gt;4)-[alpha-L-Fuc-(1-&gt;3)]-beta-D-GlcNAc-(1-&gt;3)-beta-D-Gal-(1-&gt;4)-D-Glc + GDP + H(+). It catalyses the reaction an alpha-L-Fuc-(1-&gt;2)-beta-D-Gal-(1-&gt;4)-beta-D-GlcNAc derivative + GDP-beta-L-fucose = an alpha-L-Fuc-(1-&gt;2)-beta-D-Gal-(1-&gt;4)-[alpha-L-Fuc-(1-&gt;3)]-beta-D-GlcNAc derivative + GDP + H(+). The protein operates within protein modification; protein glycosylation. It participates in glycolipid biosynthesis. With respect to regulation, activated by Mn2+. Its function is as follows. Catalyzes alpha(1-&gt;3) linkage of fucosyl moiety transferred from GDP-beta-L-fucose to N-acetyl glucosamine (GlcNAc) within type 2 lactosamine (LacNAc, beta-D-Gal-(1-&gt;4)-beta-D-GlcNAc-) glycan attached to glycolipids and N- or O-linked glycoproteins. Fucosylates distal type 2 LacNAc and its fucosylated (H-type 2 LacNAc) and sialylated (sialyl-type 2 LacNAc) derivatives to form Lewis x (Lex) (CD15) and Lewis y (Ley) antigenic epitopes involved in cell adhesion and differentiation. Generates Lex epitopes in the brain, presumably playing a role in the maintenance of neuronal stemness and neurite outgrowth in progenitor neural cells. Fucosylates the internal type 2 LacNAc unit of the polylactosamine chain to form VIM-2 antigen that serves as recognition epitope for SELE. Can also modify milk oligosaccharides in particular type 2 tetrasaccharide LNnT. This is 4-galactosyl-N-acetylglucosaminide 3-alpha-L-fucosyltransferase 9 from Canis lupus familiaris (Dog).